A 411-amino-acid polypeptide reads, in one-letter code: MNSKQRVYAFFWIFGLVNNVLYVVILSAAVDIVGPKVPKTLVLLMDITPSLLIKVTAPFFIKSIPYTMRIYALIALSCIGMIFVSGKSLLLCMIGIAMASVSSGFGEVSFLQLSHFFEENALNGWSSGTGGAGIVGSSVYMLLTSIFKLPIRLSLLSFTILPFAFLLYFKLDTTQIEYDSISSSGEETLIRNSNSNALQTDTFNESIRLSKTEEQNIFVSSIDHFKSTCVNLKALVVPYMLPLSSVYLFEYLINQAVSPTLLFPLDSRGLPPFFNKYRDMYVTYGTLYQLGVFISRSLAHKFRMHNLYFLSALQGLNLVLTILQAWIYIVHTPWPIMILIFYEGLLGGSSYVNTFLNVLEEVDMDKREFSLGAVSIADSLGVFIAALVGLGLEPTICNHQVSTGRPWCRME.

An N-terminal signal peptide occupies residues 1-29 (MNSKQRVYAFFWIFGLVNNVLYVVILSAA). 8 helical membrane-spanning segments follow: residues 41-61 (LVLL…PFFI), 79-99 (IGMI…IAMA), 127-147 (SGTG…TSIF), 149-169 (LPIR…LLYF), 281-300 (YVTY…SLAH), 307-329 (LYFL…WIYI), 334-356 (WPIM…NTFL), and 371-391 (LGAV…VGLG).

The protein belongs to the battenin family.

The protein localises to the vacuole membrane. In terms of biological role, involved in vacuolar transport and vacuole pH homeostasis. Also required for cytokinesis. The chain is Protein BTN1 (BTN1) from Candida glabrata (strain ATCC 2001 / BCRC 20586 / JCM 3761 / NBRC 0622 / NRRL Y-65 / CBS 138) (Yeast).